A 366-amino-acid polypeptide reads, in one-letter code: Carbamoyl phosphate synthase small chain (366 aa).

Residues 1–168 (MYGILVLEDG…KETVIYNAED (168 aa)) are CPSase. L-glutamine is bound by residues Ser-45, Gly-220, and Gly-222. The Glutamine amidotransferase type-1 domain occupies 172 to 363 (RCVLIDCGVK…VELGIKFKAE (192 aa)). Residue Cys-247 is the Nucleophile of the active site. Leu-248, Gln-251, Asn-289, Gly-291, and Phe-292 together coordinate L-glutamine. Catalysis depends on residues His-336 and Glu-338.

This sequence belongs to the CarA family. Composed of two chains; the small (or glutamine) chain promotes the hydrolysis of glutamine to ammonia, which is used by the large (or ammonia) chain to synthesize carbamoyl phosphate. Tetramer of heterodimers (alpha,beta)4.

The enzyme catalyses hydrogencarbonate + L-glutamine + 2 ATP + H2O = carbamoyl phosphate + L-glutamate + 2 ADP + phosphate + 2 H(+). It carries out the reaction L-glutamine + H2O = L-glutamate + NH4(+). It participates in amino-acid biosynthesis; L-arginine biosynthesis; carbamoyl phosphate from bicarbonate: step 1/1. Its pathway is pyrimidine metabolism; UMP biosynthesis via de novo pathway; (S)-dihydroorotate from bicarbonate: step 1/3. Small subunit of the glutamine-dependent carbamoyl phosphate synthetase (CPSase). CPSase catalyzes the formation of carbamoyl phosphate from the ammonia moiety of glutamine, carbonate, and phosphate donated by ATP, constituting the first step of 2 biosynthetic pathways, one leading to arginine and/or urea and the other to pyrimidine nucleotides. The small subunit (glutamine amidotransferase) binds and cleaves glutamine to supply the large subunit with the substrate ammonia. The polypeptide is Carbamoyl phosphate synthase small chain (Methanococcus maripaludis (strain C5 / ATCC BAA-1333)).